We begin with the raw amino-acid sequence, 182 residues long: Adenine phosphoribosyltransferase (182 aa).

This sequence belongs to the purine/pyrimidine phosphoribosyltransferase family. In terms of assembly, homodimer.

It is found in the cytoplasm. The enzyme catalyses AMP + diphosphate = 5-phospho-alpha-D-ribose 1-diphosphate + adenine. Its pathway is purine metabolism; AMP biosynthesis via salvage pathway; AMP from adenine: step 1/1. Catalyzes a salvage reaction resulting in the formation of AMP, that is energically less costly than de novo synthesis. This chain is Adenine phosphoribosyltransferase, found in Stutzerimonas stutzeri (Pseudomonas stutzeri).